Here is a 144-residue protein sequence, read N- to C-terminus: MEKFLDINEIKKIIPHRYPFLLVDKITELEEGKSAVGYKNVTANEYFFNGHFPEEPVMPGVLIIEALAQVGAVAILSKEEFKGKIAYFGGINKAKFRKKVVPGDVLKLSIDLTKIKGVAGVGKAVATVDGKVAAEAELLFVVGK.

His-51 is an active-site residue.

Belongs to the thioester dehydratase family. FabZ subfamily.

Its subcellular location is the cytoplasm. The enzyme catalyses a (3R)-hydroxyacyl-[ACP] = a (2E)-enoyl-[ACP] + H2O. Functionally, involved in unsaturated fatty acids biosynthesis. Catalyzes the dehydration of short chain beta-hydroxyacyl-ACPs and long chain saturated and unsaturated beta-hydroxyacyl-ACPs. This Clostridium botulinum (strain Langeland / NCTC 10281 / Type F) protein is 3-hydroxyacyl-[acyl-carrier-protein] dehydratase FabZ.